A 955-amino-acid chain; its full sequence is UPF0182 protein syc2310_c (955 aa).

A run of 9 helical transmembrane segments spans residues 12 to 32 (IAAIALGLSLLTRIHIETLWF), 45 to 65 (LAVQALLFSVVGIAITGLIGG), 85 to 105 (LQLGGLLTVLTLLWIALLALT), 141 to 161 (GSWPLGMGLLLGVGSLVLFLW), 163 to 183 (PWPLLIGLSSLTSLAIALLTS), 224 to 244 (FDLWIGLAFSFCAVLAVYYLA), 263 to 283 (HLVRLAIAIALFLAGHCWLAQ), 306 to 326 (LPLLQVWMILFGIAAIALFWQ), and 343 to 363 (AAIASVLIWVTLPAIVQQLVV).

It belongs to the UPF0182 family.

Its subcellular location is the cell membrane. The polypeptide is UPF0182 protein syc2310_c (Synechococcus sp. (strain ATCC 27144 / PCC 6301 / SAUG 1402/1) (Anacystis nidulans)).